We begin with the raw amino-acid sequence, 273 residues long: Formamidopyrimidine-DNA glycosylase (273 aa).

Pro-2 serves as the catalytic Schiff-base intermediate with DNA. Glu-3 acts as the Proton donor in catalysis. Lys-58 functions as the Proton donor; for beta-elimination activity in the catalytic mechanism. His-91, Arg-109, and Arg-154 together coordinate DNA. An FPG-type zinc finger spans residues 239–273 (FVYARTGEPCRICNAPVRQIVQGQRSTFYCPNCQK). Arg-263 functions as the Proton donor; for delta-elimination activity in the catalytic mechanism.

It belongs to the FPG family. As to quaternary structure, monomer. Zn(2+) is required as a cofactor.

It catalyses the reaction Hydrolysis of DNA containing ring-opened 7-methylguanine residues, releasing 2,6-diamino-4-hydroxy-5-(N-methyl)formamidopyrimidine.. The catalysed reaction is 2'-deoxyribonucleotide-(2'-deoxyribose 5'-phosphate)-2'-deoxyribonucleotide-DNA = a 3'-end 2'-deoxyribonucleotide-(2,3-dehydro-2,3-deoxyribose 5'-phosphate)-DNA + a 5'-end 5'-phospho-2'-deoxyribonucleoside-DNA + H(+). Its function is as follows. Involved in base excision repair of DNA damaged by oxidation or by mutagenic agents. Acts as a DNA glycosylase that recognizes and removes damaged bases. Has a preference for oxidized purines, such as 7,8-dihydro-8-oxoguanine (8-oxoG). Has AP (apurinic/apyrimidinic) lyase activity and introduces nicks in the DNA strand. Cleaves the DNA backbone by beta-delta elimination to generate a single-strand break at the site of the removed base with both 3'- and 5'-phosphates. This Herminiimonas arsenicoxydans protein is Formamidopyrimidine-DNA glycosylase.